The primary structure comprises 487 residues: Histamine H1 receptor (487 aa).

Residues 1 to 29 (MSLPNSSCLLEDKMCEGNKTTMASPQLMP) lie on the Extracellular side of the membrane. N-linked (GlcNAc...) asparagine glycosylation is found at N5 and N18. The chain crosses the membrane as a helical span at residues 30–50 (LVVVLSTICLVTVGLNLLVLY). Topologically, residues 51–64 (AVRSERKLHTVGNL) are cytoplasmic. The chain crosses the membrane as a helical span at residues 65-89 (YIVSLSVADLIVGAVVMPMNILYLL). Over 90–97 (MSKWSLGR) the chain is Extracellular. Residues 98–123 (PLCLFWLSMDYVASTASIFSVFILCI) traverse the membrane as a helical segment. An intrachain disulfide couples C100 to C180. Histamine contacts are provided by D107 and T112. The interval 107–112 (DYVAST) is important for agonist binding. Topologically, residues 124–144 (DRYRSVQQPLRYLKYRTKTRA) are cytoplasmic. Phosphothreonine is present on residues T140 and T142. The helical transmembrane segment at 145–164 (SATILGAWFLSFLWVIPILG) threads the bilayer. The Extracellular portion of the chain corresponds to 165 to 188 (WNHFMQQTSVRREDKCETDFYDVT). Residues 189-211 (WFKVMTAIINFYLPTLLMLWFYA) traverse the membrane as a helical segment. N198 is a histamine binding site. Residues 212–416 (KIYKAVRQHC…MNRERKAAKQ (205 aa)) are Cytoplasmic-facing. The residue at position 230 (S230) is a Phosphoserine. Residues 238–261 (KLRPENPKGDAKKPGKESPWEVLK) show a composition bias toward basic and acidic residues. The tract at residues 238 to 291 (KLRPENPKGDAKKPGKESPWEVLKRKPKDAGGGSVLKSPSQTPKEMKSPVVFSQ) is disordered. T279 bears the Phosphothreonine mark. Phosphoserine occurs at positions 344 and 347. Positions 345–379 (EISEDQMLGDSQSFSRTDSDTTTETAPGKGKLRSG) are disordered. Residues 353–369 (GDSQSFSRTDSDTTTET) are compositionally biased toward polar residues. Phosphoserine is present on residues S380, S396, and S398. The chain crosses the membrane as a helical span at residues 417 to 440 (LGFIMAAFILCWIPYFIFFMVIAF). Residues 424-428 (FILCW) form an important for agonist binding region. Position 431 (Y431) interacts with histamine. A disulfide bond links C441 and C444. Topologically, residues 441-446 (CKNCCN) are extracellular. Residues 447–469 (EHLHMFTIWLGYINSTLNPLIYP) form a helical membrane-spanning segment. Residues 470 to 487 (LCNENFKKTFKRILHIRS) lie on the Cytoplasmic side of the membrane.

It belongs to the G-protein coupled receptor 1 family. Post-translationally, phosphorylation at sites in the second and third cytoplasmic loops independently contribute to agonist-induced receptor down-regulation.

The protein localises to the cell membrane. Its function is as follows. G-protein-coupled receptor for histamine, a biogenic amine that functions as an immune modulator and a neurotransmitter. Through the H1 receptor, histamine mediates the contraction of smooth muscles and increases capillary permeability due to contraction of terminal venules. Also mediates neurotransmission in the central nervous system and thereby regulates circadian rhythms, emotional and locomotor activities as well as cognitive functions. This Homo sapiens (Human) protein is Histamine H1 receptor.